The following is a 144-amino-acid chain: Large ribosomal subunit protein uL15 (144 aa).

A disordered region spans residues Met-1–Gly-52. Gly residues predominate over residues Arg-21 to Gly-31.

This sequence belongs to the universal ribosomal protein uL15 family. Part of the 50S ribosomal subunit.

In terms of biological role, binds to the 23S rRNA. This chain is Large ribosomal subunit protein uL15, found in Buchnera aphidicola subsp. Acyrthosiphon kondoi (Acyrthosiphon kondoi symbiotic bacterium).